Reading from the N-terminus, the 249-residue chain is ATP synthase subunits region ORF 6 (249 aa).

The polypeptide is ATP synthase subunits region ORF 6 (Fuscovulum blasticum (Rhodobacter blasticus)).